An 89-amino-acid polypeptide reads, in one-letter code: Phosphocarrier protein HPr (89 aa).

Residues 1–88 (MLKQSIEIIN…DLINGYFGEG (88 aa)) enclose the HPr domain. Histidine 15 acts as the Pros-phosphohistidine intermediate in catalysis. A Phosphoserine; by HPrK/P modification is found at serine 46.

Belongs to the HPr family.

Its subcellular location is the cytoplasm. With respect to regulation, phosphorylation on Ser-46 inhibits the phosphoryl transfer from enzyme I to HPr. General (non sugar-specific) component of the phosphoenolpyruvate-dependent sugar phosphotransferase system (sugar PTS). This major carbohydrate active-transport system catalyzes the phosphorylation of incoming sugar substrates concomitantly with their translocation across the cell membrane. The phosphoryl group from phosphoenolpyruvate (PEP) is transferred to the phosphoryl carrier protein HPr by enzyme I. Phospho-HPr then transfers it to the PTS EIIA domain. This is Phosphocarrier protein HPr (ptsH) from Neisseria meningitidis serogroup A / serotype 4A (strain DSM 15465 / Z2491).